Reading from the N-terminus, the 270-residue chain is 4-hydroxy-tetrahydrodipicolinate reductase (270 aa).

Glycine 7–methionine 12 is a binding site for NAD(+). Arginine 34 contacts NADP(+). Residues glycine 97–threonine 99 and serine 121–methionine 124 contribute to the NAD(+) site. Catalysis depends on histidine 155, which acts as the Proton donor/acceptor. Histidine 156 is a binding site for (S)-2,3,4,5-tetrahydrodipicolinate. Lysine 159 serves as the catalytic Proton donor. Residue glycine 165–threonine 166 coordinates (S)-2,3,4,5-tetrahydrodipicolinate.

This sequence belongs to the DapB family.

Its subcellular location is the cytoplasm. The enzyme catalyses (S)-2,3,4,5-tetrahydrodipicolinate + NAD(+) + H2O = (2S,4S)-4-hydroxy-2,3,4,5-tetrahydrodipicolinate + NADH + H(+). It carries out the reaction (S)-2,3,4,5-tetrahydrodipicolinate + NADP(+) + H2O = (2S,4S)-4-hydroxy-2,3,4,5-tetrahydrodipicolinate + NADPH + H(+). The protein operates within amino-acid biosynthesis; L-lysine biosynthesis via DAP pathway; (S)-tetrahydrodipicolinate from L-aspartate: step 4/4. Catalyzes the conversion of 4-hydroxy-tetrahydrodipicolinate (HTPA) to tetrahydrodipicolinate. This is 4-hydroxy-tetrahydrodipicolinate reductase from Bartonella quintana (strain Toulouse) (Rochalimaea quintana).